The primary structure comprises 201 residues: GTP cyclohydrolase 1 (201 aa).

Zn(2+) is bound by residues Cys90, His93, and Cys163.

The protein belongs to the GTP cyclohydrolase I family. In terms of assembly, toroid-shaped homodecamer, composed of two pentamers of five dimers.

The catalysed reaction is GTP + H2O = 7,8-dihydroneopterin 3'-triphosphate + formate + H(+). It participates in cofactor biosynthesis; 7,8-dihydroneopterin triphosphate biosynthesis; 7,8-dihydroneopterin triphosphate from GTP: step 1/1. The protein is GTP cyclohydrolase 1 (folE) of Streptomyces coelicolor (strain ATCC BAA-471 / A3(2) / M145).